A 494-amino-acid chain; its full sequence is Glucose-6-phosphate exchanger SLC37A2 (494 aa).

The chain crosses the membrane as a helical span at residues 20 to 37 (YRFSILFLTFVFYTSYHL). N-linked (GlcNAc...) asparagine glycans are attached at residues Asn52, Asn63, and Asn67. 11 helical membrane-spanning segments follow: residues 85–105 (FGVL…FSGI), 116–136 (LSTG…GFYW), 146–166 (LVQA…VACV), 187–207 (SVGN…AWGL), 208–228 (SFIV…LFLV), 295–315 (LCLL…PLYI), 327–347 (GDLS…AGLV), 355–375 (ASTC…YNKI), 384–404 (VGML…ITTA), 427–447 (AIID…AGLI), and 455–475 (VFYM…RLVY).

This sequence belongs to the major facilitator superfamily. Organophosphate:Pi antiporter (OPA) (TC 2.A.1.4) family.

It is found in the endoplasmic reticulum membrane. The catalysed reaction is D-glucose 6-phosphate(in) + phosphate(out) = D-glucose 6-phosphate(out) + phosphate(in). In terms of biological role, inorganic phosphate and glucose-6-phosphate antiporter. May transport cytoplasmic glucose-6-phosphate into the lumen of the endoplasmic reticulum and translocate inorganic phosphate into the opposite direction. The protein is Glucose-6-phosphate exchanger SLC37A2 of Danio rerio (Zebrafish).